The sequence spans 3003 residues: MAX gene-associated protein (3003 aa).

Glycyl lysine isopeptide (Lys-Gly) (interchain with G-Cter in SUMO2) cross-links involve residues lysine 4 and lysine 178. Positions 84–260 (MWNEFHNRST…YNPFAKGFRD (177 aa)) form a DNA-binding region, T-box. Residues 259–277 (RDDGLSSKPQREGKQRNSS) show a composition bias toward basic and acidic residues. A disordered region spans residues 259-290 (RDDGLSSKPQREGKQRNSSDQEGNSVSSSPAH). Polar residues predominate over residues 278-288 (DQEGNSVSSSP). Residues lysine 323, lysine 329, lysine 348, lysine 431, lysine 458, lysine 463, and lysine 480 each participate in a glycyl lysine isopeptide (Lys-Gly) (interchain with G-Cter in SUMO2) cross-link. Serine 531 carries the phosphoserine modification. The segment at 553 to 647 (ILDNSSTERI…NIPVGPGSTF (95 aa)) is disordered. Lysine 567 participates in a covalent cross-link: Glycyl lysine isopeptide (Lys-Gly) (interchain with G-Cter in SUMO2). A compositionally biased stretch (polar residues) spans 595-607 (KTVTASHSASPNT). The residue at position 604 (serine 604) is a Phosphoserine. Glycyl lysine isopeptide (Lys-Gly) (interchain with G-Cter in SUMO2) cross-links involve residues lysine 610, lysine 651, lysine 782, lysine 788, lysine 814, and lysine 823. Residues 610 to 621 (KRGRPRKLRLSK) show a composition bias toward basic residues. Position 848 is a phosphoserine (serine 848). Residues 871 to 913 (KQSTISPSTSHSVKPQSVTTASRKTKAQNKQTTLSGRTKSSYK) are compositionally biased toward polar residues. Disordered regions lie at residues 871 to 946 (KQST…TSDN) and 967 to 987 (LRQA…GLSK). Position 921 is a phosphoserine (serine 921). Lysine 925 is covalently cross-linked (Glycyl lysine isopeptide (Lys-Gly) (interchain with G-Cter in SUMO2)). The segment covering 937-946 (KNSLSSTSDN) has biased composition (polar residues). Positions 969–978 (QAQQQHLQQQ) are enriched in low complexity. Residues lysine 987 and lysine 1088 each participate in a glycyl lysine isopeptide (Lys-Gly) (interchain with G-Cter in SUMO2) cross-link. Positions 1111-1130 (LGEEGREGGGVREDEEQLKE) are disordered. Basic and acidic residues predominate over residues 1113–1122 (EEGREGGGVR). Glycyl lysine isopeptide (Lys-Gly) (interchain with G-Cter in SUMO2) cross-links involve residues lysine 1136, lysine 1158, lysine 1194, and lysine 1202. 4 disordered regions span residues 1186–1215 (QPDL…NPVI), 1246–1277 (QRQL…TKEL), 1297–1323 (SQEK…RSPG), and 1376–1424 (RGEK…DISP). Low complexity-rich tracts occupy residues 1248–1269 (QLSP…YSSP) and 1303–1315 (KSSC…SSTS). Residues serine 1423 and serine 1450 each carry the phosphoserine modification. Residues lysine 1454 and lysine 1495 each participate in a glycyl lysine isopeptide (Lys-Gly) (interchain with G-Cter in SUMO2) cross-link. 6 disordered regions span residues 1476–1508 (AKVA…RSGK), 1722–1746 (PPVS…SNNV), 1856–1885 (ISPP…PVGT), 1920–1954 (IKKE…KALD), 1964–1983 (SGII…GGDL), and 1988–2038 (TLRE…AGSK). 3 stretches are compositionally biased toward polar residues: residues 1488–1507 (LPST…NRSG), 1735–1746 (PVTTPQISSNNV), and 1859–1880 (PETQ…STGG). Residues lysine 1937 and lysine 1944 each participate in a glycyl lysine isopeptide (Lys-Gly) (interchain with G-Cter in SUMO2) cross-link. Polar residues predominate over residues 1964 to 1976 (SGIIASENTSNNS). Residues lysine 2060 and lysine 2084 each participate in a glycyl lysine isopeptide (Lys-Gly) (interchain with G-Cter in SUMO2) cross-link. The interval 2087–2110 (LSGNQVKEQQSNSQAEAKKDCEDS) is disordered. Over residues 2088 to 2101 (SGNQVKEQQSNSQA) the composition is skewed to polar residues. Glycyl lysine isopeptide (Lys-Gly) (interchain with G-Cter in SUMO2) cross-links involve residues lysine 2104, lysine 2152, and lysine 2179. Arginine 2206 is subject to Omega-N-methylarginine. The segment at 2207–2255 (GSRHFQGHLLLPREQMKPKQQTKDGRSSAADFTVLDLEDEDEEDEKTDD) is disordered. A compositionally biased stretch (basic and acidic residues) spans 2220-2232 (EQMKPKQQTKDGR). Residue lysine 2225 forms a Glycyl lysine isopeptide (Lys-Gly) (interchain with G-Cter in SUMO2) linkage. Acidic residues predominate over residues 2242–2255 (DLEDEDEEDEKTDD). Residues lysine 2317, lysine 2352, lysine 2396, and lysine 2471 each participate in a glycyl lysine isopeptide (Lys-Gly) (interchain with G-Cter in SUMO2) cross-link. Residues 2362–2413 (YYRRTHTANERRRRGEMRDLFEKLKITLGLLHSSKVSKSLILNRAFSEIQGL) enclose the bHLH domain. Position 2480 is a phosphoserine (serine 2480). The segment at 2515-2534 (KRDQATENASPSDTPHSSAN) is disordered. The segment covering 2520–2534 (TENASPSDTPHSSAN) has biased composition (polar residues). Residues lysine 2568 and lysine 2618 each participate in a glycyl lysine isopeptide (Lys-Gly) (interchain with G-Cter in SUMO2) cross-link. The segment covering 2629-2651 (SEASSLKDTERISSRGNHRDSRK) has biased composition (basic and acidic residues). Residues 2629-2654 (SEASSLKDTERISSRGNHRDSRKALG) form a disordered region. A Glycyl lysine isopeptide (Lys-Gly) (interchain with G-Cter in SUMO2) cross-link involves residue lysine 2724. 2 positions are modified to phosphoserine: serine 2849 and serine 2860. Positions 2877-2917 (LVSHRKSSDGGQSTSGLPAEPESVSSPPILHMKTGPENSNT) are disordered. Lysine 2979 is covalently cross-linked (Glycyl lysine isopeptide (Lys-Gly) (interchain with G-Cter in SUMO2)).

Component of some MLL1/MLL complex, at least composed of the core components KMT2A/MLL1, ASH2L, HCFC1/HCF1, WDR5 and RBBP5, as well as the facultative components BACC1, CHD8, E2F6, HSP70, INO80C, KANSL1, LAS1L, MAX, MCRS1, MGA, MYST1/MOF, PELP1, PHF20, PRP31, RING2, RUVB1/TIP49A, RUVB2/TIP49B, SENP3, TAF1, TAF4, TAF6, TAF7, TAF9 and TEX10. Interacts with ZMYND11. Interacts with MAX. Requires heterodimerization with MAX for E-box binding. Highly expressed in germ cells and granulosa cells.

Its subcellular location is the nucleus. In terms of biological role, functions as a dual-specificity transcription factor, regulating the expression of both MAX-network and T-box family target genes. Functions as a repressor or an activator. Binds to 5'-AATTTCACACCTAGGTGTGAAATT-3' core sequence and seems to regulate MYC-MAX target genes. Suppresses transcriptional activation by MYC and inhibits MYC-dependent cell transformation. Function activated by heterodimerization with MAX. This heterodimerization serves the dual function of both generating an E-box-binding heterodimer and simultaneously blocking interaction of a corepressor. This is MAX gene-associated protein from Mus musculus (Mouse).